Here is a 235-residue protein sequence, read N- to C-terminus: Orotidine 5'-phosphate decarboxylase (235 aa).

Substrate contacts are provided by residues D12, K34, 61 to 70 (DLKFHDIPNT), T121, R182, Q191, G211, and R212. Residue K63 is the Proton donor of the active site.

This sequence belongs to the OMP decarboxylase family. Type 1 subfamily. As to quaternary structure, homodimer.

The enzyme catalyses orotidine 5'-phosphate + H(+) = UMP + CO2. The protein operates within pyrimidine metabolism; UMP biosynthesis via de novo pathway; UMP from orotate: step 2/2. Catalyzes the decarboxylation of orotidine 5'-monophosphate (OMP) to uridine 5'-monophosphate (UMP). In Marinomonas sp. (strain MWYL1), this protein is Orotidine 5'-phosphate decarboxylase.